Consider the following 401-residue polypeptide: Serine--glyoxylate aminotransferase (401 aa).

Met1 is modified (N-acetylmethionine). Pyridoxal 5'-phosphate is bound by residues 68–70, Thr148, and 200–201; these read TGT and QK. Lys201 contributes to the 3-hydroxypyruvate binding site. Residue Lys201 is modified to N6-(pyridoxal phosphate)lysine. The residue at position 204 (Ser204) is a Phosphoserine. A 3-hydroxypyruvate-binding site is contributed by Arg347. The short motif at 399 to 401 is the Microbody targeting signal element; the sequence is SRI.

It belongs to the class-V pyridoxal-phosphate-dependent aminotransferase family. In terms of assembly, forms homodimers. Interacts with RABGAP22. Pyridoxal 5'-phosphate serves as cofactor. As to expression, widely expressed. Preferentially expressed in green, leafy tissues, root cortex and epidermis, developing siliques and dry seeds.

It localises to the peroxisome. The catalysed reaction is glyoxylate + L-serine = 3-hydroxypyruvate + glycine. It carries out the reaction glyoxylate + L-alanine = glycine + pyruvate. The enzyme catalyses L-serine + pyruvate = 3-hydroxypyruvate + L-alanine. It catalyses the reaction 3-hydroxypyruvate + L-asparagine = 2-oxosuccinamate + L-serine. The catalysed reaction is L-asparagine + glyoxylate = 2-oxosuccinamate + glycine. It carries out the reaction L-asparagine + pyruvate = 2-oxosuccinamate + L-alanine. With respect to regulation, inhibited by aminooxyacetate and beta-chloro-L-alanine, but not by p-hydroxymercuribenzoate. Functionally, photorespiratory enzyme that catalyzes transamination reactions with multiple substrates, including asparagine. Functions exclusively as a catabolic enzyme in Asn metabolism. Involved in root development during seedling establishment after seed germination by regulating serine homeostasis and acetate conversion. The protein is Serine--glyoxylate aminotransferase of Arabidopsis thaliana (Mouse-ear cress).